The following is a 284-amino-acid chain: Large ribosomal subunit protein uL2 (284 aa).

2 disordered regions span residues E28–S50 and R232–K284. Positions R36 to F46 are enriched in basic residues. Over residues D240–H250 the composition is skewed to basic and acidic residues. Basic residues predominate over residues K264 to K284.

The protein belongs to the universal ribosomal protein uL2 family. As to quaternary structure, part of the 50S ribosomal subunit. Forms a bridge to the 30S subunit in the 70S ribosome.

One of the primary rRNA binding proteins. Required for association of the 30S and 50S subunits to form the 70S ribosome, for tRNA binding and peptide bond formation. It has been suggested to have peptidyltransferase activity; this is somewhat controversial. Makes several contacts with the 16S rRNA in the 70S ribosome. The sequence is that of Large ribosomal subunit protein uL2 from Chlamydia trachomatis serovar L2 (strain ATCC VR-902B / DSM 19102 / 434/Bu).